The primary structure comprises 218 residues: Small ribosomal subunit protein uS3 (218 aa).

The region spanning 38 to 106 (IREFISKRLS…RVHINILEIK (69 aa)) is the KH type-2 domain.

This sequence belongs to the universal ribosomal protein uS3 family. In terms of assembly, part of the 30S ribosomal subunit. Forms a tight complex with proteins S10 and S14.

In terms of biological role, binds the lower part of the 30S subunit head. Binds mRNA in the 70S ribosome, positioning it for translation. This Bacillus velezensis (strain DSM 23117 / BGSC 10A6 / LMG 26770 / FZB42) (Bacillus amyloliquefaciens subsp. plantarum) protein is Small ribosomal subunit protein uS3.